Here is a 61-residue protein sequence, read N- to C-terminus: Tryptophyllin-1 (61 aa).

A signal peptide spans 1–22; sequence MDILKKSLFLALFLGLVSISFC. The propeptide occupies 23–53; sequence DEEKRQDDDESNESEEKKEIHEEGSQEERRE. Positions 24-61 are disordered; the sequence is EEKRQDDDESNESEEKKEIHEEGSQEERREKPPPWVPV. Residues 36 to 55 are compositionally biased toward basic and acidic residues; it reads SEEKKEIHEEGSQEERREKP.

Expressed by the skin glands.

It is found in the secreted. In terms of biological role, the synthetic peptide inhibits bradykinin-induced relaxation of rat tail artery smooth muscle, and also has anti-proliferative effects on the human prostate cancer cell lines LNCaP, PC3 and DU145. The polypeptide is Tryptophyllin-1 (Phyllomedusa sauvagei (Sauvage's leaf frog)).